A 335-amino-acid chain; its full sequence is tRNA N6-adenosine threonylcarbamoyltransferase (335 aa).

Fe cation is bound by residues His111 and His115. Substrate contacts are provided by residues 134-138, Asp167, Gly180, and Asn270; that span reads LISGG. A Fe cation-binding site is contributed by Asp298.

Belongs to the KAE1 / TsaD family. Fe(2+) serves as cofactor.

Its subcellular location is the cytoplasm. It catalyses the reaction L-threonylcarbamoyladenylate + adenosine(37) in tRNA = N(6)-L-threonylcarbamoyladenosine(37) in tRNA + AMP + H(+). Its function is as follows. Required for the formation of a threonylcarbamoyl group on adenosine at position 37 (t(6)A37) in tRNAs that read codons beginning with adenine. Is involved in the transfer of the threonylcarbamoyl moiety of threonylcarbamoyl-AMP (TC-AMP) to the N6 group of A37, together with TsaE and TsaB. TsaD likely plays a direct catalytic role in this reaction. This Nitrosococcus oceani (strain ATCC 19707 / BCRC 17464 / JCM 30415 / NCIMB 11848 / C-107) protein is tRNA N6-adenosine threonylcarbamoyltransferase.